The primary structure comprises 386 residues: Putative 8-amino-7-oxononanoate synthase 2 (386 aa).

Arg-21 lines the substrate pocket. Residue 104–105 (GY) participates in pyridoxal 5'-phosphate binding. His-129 lines the substrate pocket. Residues Ser-176, 201 to 204 (DDAH), and 230 to 233 (TLSK) contribute to the pyridoxal 5'-phosphate site. Residue Lys-233 is modified to N6-(pyridoxal phosphate)lysine.

Belongs to the class-II pyridoxal-phosphate-dependent aminotransferase family. BioF subfamily. As to quaternary structure, homodimer. It depends on pyridoxal 5'-phosphate as a cofactor.

It carries out the reaction 6-carboxyhexanoyl-[ACP] + L-alanine + H(+) = (8S)-8-amino-7-oxononanoate + holo-[ACP] + CO2. The protein operates within cofactor biosynthesis; biotin biosynthesis. Functionally, catalyzes the decarboxylative condensation of pimeloyl-[acyl-carrier protein] and L-alanine to produce 8-amino-7-oxononanoate (AON), [acyl-carrier protein], and carbon dioxide. The polypeptide is Putative 8-amino-7-oxononanoate synthase 2 (bioF) (Bacillus velezensis (strain DSM 23117 / BGSC 10A6 / LMG 26770 / FZB42) (Bacillus amyloliquefaciens subsp. plantarum)).